The chain runs to 255 residues: MQRYVNFFDKNRRDVHGLLLLDKPTGFSSSFFLNKIKKLFYAKKVGYIGTLDPIATGMLPICFGKATKFASYLLNSDKRYRVLVKLGESTDTFDASGVIIRIADVQCNKEKIEECLKSFLGTSLQIPPMFSSLKYQGLPLYKYARRGVNIPRKSRTIHVYSLYCLNQLNSIIELEIHCSKGTYVRSIVNDIGEYLGCGAHIISLRRLMVGQYIASMMVNIKTIESIFFDKDLNDLEVLDKLDNLLISTETIMCSF.

Asp52 (nucleophile) is an active-site residue. Residues Tyr80, Tyr183, and Leu204 each coordinate substrate.

It belongs to the pseudouridine synthase TruB family. Type 1 subfamily.

It carries out the reaction uridine(55) in tRNA = pseudouridine(55) in tRNA. In terms of biological role, responsible for synthesis of pseudouridine from uracil-55 in the psi GC loop of transfer RNAs. In Blochmanniella floridana, this protein is tRNA pseudouridine synthase B.